A 361-amino-acid polypeptide reads, in one-letter code: Peptide chain release factor 1 (361 aa).

An N5-methylglutamine modification is found at Gln236.

The protein belongs to the prokaryotic/mitochondrial release factor family. In terms of processing, methylated by PrmC. Methylation increases the termination efficiency of RF1.

The protein resides in the cytoplasm. Functionally, peptide chain release factor 1 directs the termination of translation in response to the peptide chain termination codons UAG and UAA. This is Peptide chain release factor 1 from Lactobacillus delbrueckii subsp. bulgaricus (strain ATCC 11842 / DSM 20081 / BCRC 10696 / JCM 1002 / NBRC 13953 / NCIMB 11778 / NCTC 12712 / WDCM 00102 / Lb 14).